The primary structure comprises 88 residues: Small ribosomal subunit protein uS15c (88 aa).

It belongs to the universal ribosomal protein uS15 family. Part of the 30S ribosomal subunit.

It localises to the plastid. The protein resides in the chloroplast. This chain is Small ribosomal subunit protein uS15c (rps15), found in Angiopteris evecta (Mule's foot fern).